Consider the following 442-residue polypeptide: tRNA(Ile)-lysidine synthase (442 aa).

30-35 (SGGLDS) lines the ATP pocket.

This sequence belongs to the tRNA(Ile)-lysidine synthase family.

The protein localises to the cytoplasm. The catalysed reaction is cytidine(34) in tRNA(Ile2) + L-lysine + ATP = lysidine(34) in tRNA(Ile2) + AMP + diphosphate + H(+). Ligates lysine onto the cytidine present at position 34 of the AUA codon-specific tRNA(Ile) that contains the anticodon CAU, in an ATP-dependent manner. Cytidine is converted to lysidine, thus changing the amino acid specificity of the tRNA from methionine to isoleucine. The chain is tRNA(Ile)-lysidine synthase from Pseudomonas fluorescens (strain Pf0-1).